The chain runs to 248 residues: Triosephosphate isomerase (248 aa).

Position 9-11 (9-11 (NWK)) interacts with substrate. The Electrophile role is filled by His94. Catalysis depends on Glu166, which acts as the Proton acceptor. Substrate-binding positions include Gly172, Ser211, and 232 to 233 (GG).

This sequence belongs to the triosephosphate isomerase family. As to quaternary structure, homodimer.

The protein resides in the cytoplasm. It carries out the reaction D-glyceraldehyde 3-phosphate = dihydroxyacetone phosphate. The protein operates within carbohydrate biosynthesis; gluconeogenesis. Its pathway is carbohydrate degradation; glycolysis; D-glyceraldehyde 3-phosphate from glycerone phosphate: step 1/1. In terms of biological role, involved in the gluconeogenesis. Catalyzes stereospecifically the conversion of dihydroxyacetone phosphate (DHAP) to D-glyceraldehyde-3-phosphate (G3P). This chain is Triosephosphate isomerase, found in Ruthia magnifica subsp. Calyptogena magnifica.